The chain runs to 607 residues: Albumin (607 aa).

An N-terminal signal peptide occupies residues 1 to 18 (MKWVTFVSLLFLFSSAYS). A propeptide spanning residues 19-24 (RGVLRR) is cleaved from the precursor. Albumin domains lie at 19-209 (RGVL…DALK), 210-402 (ERIL…QFTP), and 403-600 (LVEE…KLVA). A Cu cation-binding site is contributed by histidine 27. Phosphoserine is present on serine 29. Ca(2+) contacts are provided by glutamate 30 and aspartate 37. Cysteine 77 and cysteine 86 are oxidised to a cystine. Phosphoserine occurs at positions 82 and 89. Position 91 (histidine 91) interacts with Zn(2+). Disulfide bonds link cysteine 99–cysteine 115, cysteine 114–cysteine 125, cysteine 147–cysteine 192, cysteine 191–cysteine 200, cysteine 223–cysteine 269, and cysteine 268–cysteine 276. Position 107 is a phosphothreonine (threonine 107). Ca(2+) is bound at residue glutamate 267. Positions 270 and 272 each coordinate Zn(2+). Ca(2+) is bound by residues aspartate 272, glutamate 275, aspartate 278, and aspartate 282. 8 cysteine pairs are disulfide-bonded: cysteine 288–cysteine 302, cysteine 301–cysteine 312, cysteine 339–cysteine 384, cysteine 383–cysteine 392, cysteine 415–cysteine 461, cysteine 460–cysteine 471, cysteine 484–cysteine 500, and cysteine 499–cysteine 510. At serine 442 the chain carries Phosphoserine. Residues threonine 443 and threonine 445 each carry the phosphothreonine modification. Serine 512 is modified (phosphoserine). 2 cysteine pairs are disulfide-bonded: cysteine 537/cysteine 582 and cysteine 581/cysteine 590. Lysine 557 is modified (N6-methyllysine). Phosphothreonine is present on threonine 569. Lysine 587 bears the N6-succinyllysine mark.

It belongs to the ALB/AFP/VDB family. As to quaternary structure, interacts with FCGRT; this interaction regulates ALB homeostasis. Interacts with TASOR. In plasma, occurs in a covalently-linked complex with chromophore-bound alpha-1-microglobulin; this interaction does not prevent fatty acid binding to ALB. Post-translationally, phosphorylated by FAM20C in the extracellular medium. In terms of tissue distribution, plasma.

It is found in the secreted. In terms of biological role, binds water, Ca(2+), Na(+), K(+), fatty acids, hormones, bilirubin and drugs. Its main function is the regulation of the colloidal osmotic pressure of blood. Major zinc transporter in plasma, typically binds about 80% of all plasma zinc. Major calcium and magnesium transporter in plasma, binds approximately 45% of circulating calcium and magnesium in plasma. Potentially has more than two calcium-binding sites and might additionally bind calcium in a non-specific manner. The shared binding site between zinc and calcium at residue Asp-272 suggests a crosstalk between zinc and calcium transport in the blood. The rank order of affinity is zinc &gt; calcium &gt; magnesium. Binds to the bacterial siderophore enterobactin and inhibits enterobactin-mediated iron uptake of E.coli from ferric transferrin, and may thereby limit the utilization of iron and growth of enteric bacteria such as E.coli. Does not prevent iron uptake by the bacterial siderophore aerobactin. The polypeptide is Albumin (ALB) (Equus caballus (Horse)).